Consider the following 138-residue polypeptide: uncharacterized protein (138 aa).

Transmembrane regions (helical) follow at residues 21–43 (TAFI…AGGA) and 48–65 (SLIA…YAII).

It localises to the cell membrane. This is an uncharacterized protein from Archaeoglobus fulgidus (strain ATCC 49558 / DSM 4304 / JCM 9628 / NBRC 100126 / VC-16).